The following is a 467-amino-acid chain: Argininosuccinate lyase (467 aa).

Belongs to the lyase 1 family. Argininosuccinate lyase subfamily.

The protein localises to the cytoplasm. It carries out the reaction 2-(N(omega)-L-arginino)succinate = fumarate + L-arginine. The protein operates within amino-acid biosynthesis; L-arginine biosynthesis; L-arginine from L-ornithine and carbamoyl phosphate: step 3/3. The sequence is that of Argininosuccinate lyase from Chromohalobacter salexigens (strain ATCC BAA-138 / DSM 3043 / CIP 106854 / NCIMB 13768 / 1H11).